We begin with the raw amino-acid sequence, 164 residues long: UPF0304 protein YfbU (164 aa).

The protein belongs to the UPF0304 family.

In Salmonella choleraesuis (strain SC-B67), this protein is UPF0304 protein YfbU.